The sequence spans 287 residues: Elongation factor Ts (287 aa).

The interval 81 to 84 (TDFV) is involved in Mg(2+) ion dislocation from EF-Tu.

The protein belongs to the EF-Ts family.

The protein resides in the cytoplasm. Associates with the EF-Tu.GDP complex and induces the exchange of GDP to GTP. It remains bound to the aminoacyl-tRNA.EF-Tu.GTP complex up to the GTP hydrolysis stage on the ribosome. This Nitratidesulfovibrio vulgaris (strain ATCC 29579 / DSM 644 / CCUG 34227 / NCIMB 8303 / VKM B-1760 / Hildenborough) (Desulfovibrio vulgaris) protein is Elongation factor Ts.